We begin with the raw amino-acid sequence, 376 residues long: D-alanine--D-alanine ligase (376 aa).

Residues 150–358 (KIIFEKEGLP…YSELINKLIE (209 aa)) enclose the ATP-grasp domain. 183-238 (EGRLTYPCFVKPSNAGSSVGVNKASDRESLVKALNIAAKNDRRILVEEFINGREIE) lines the ATP pocket. Positions 311, 325, and 327 each coordinate Mg(2+).

This sequence belongs to the D-alanine--D-alanine ligase family. Requires Mg(2+) as cofactor. Mn(2+) serves as cofactor.

Its subcellular location is the cytoplasm. It catalyses the reaction 2 D-alanine + ATP = D-alanyl-D-alanine + ADP + phosphate + H(+). It functions in the pathway cell wall biogenesis; peptidoglycan biosynthesis. Its function is as follows. Cell wall formation. The chain is D-alanine--D-alanine ligase from Ruminiclostridium cellulolyticum (strain ATCC 35319 / DSM 5812 / JCM 6584 / H10) (Clostridium cellulolyticum).